The primary structure comprises 637 residues: Threonine--tRNA ligase (637 aa).

Residues 1 to 61 (MPNVKLPDGN…KEDCSLIIVT (61 aa)) form the TGS domain. A catalytic region spans residues 242-533 (DHRKLGKALD…LIEHYAGKLP (292 aa)). Residues C333, H384, and H510 each coordinate Zn(2+).

Belongs to the class-II aminoacyl-tRNA synthetase family. In terms of assembly, homodimer. The cofactor is Zn(2+).

Its subcellular location is the cytoplasm. It catalyses the reaction tRNA(Thr) + L-threonine + ATP = L-threonyl-tRNA(Thr) + AMP + diphosphate + H(+). Catalyzes the attachment of threonine to tRNA(Thr) in a two-step reaction: L-threonine is first activated by ATP to form Thr-AMP and then transferred to the acceptor end of tRNA(Thr). Also edits incorrectly charged L-seryl-tRNA(Thr). The protein is Threonine--tRNA ligase of Legionella pneumophila subsp. pneumophila (strain Philadelphia 1 / ATCC 33152 / DSM 7513).